Here is a 103-residue protein sequence, read N- to C-terminus: Large ribosomal subunit protein bL21 (103 aa).

This sequence belongs to the bacterial ribosomal protein bL21 family. In terms of assembly, part of the 50S ribosomal subunit. Contacts protein L20.

In terms of biological role, this protein binds to 23S rRNA in the presence of protein L20. In Azotobacter vinelandii (strain DJ / ATCC BAA-1303), this protein is Large ribosomal subunit protein bL21.